The following is an 844-amino-acid chain: NADPH-Fe(3+) oxidoreductase subunit alpha (844 aa).

The 2Fe-2S ferredoxin-type domain maps to 1-78 (MVSLTIDGKD…GIKVTTQSEK (78 aa)). 4 residues coordinate [2Fe-2S] cluster: Cys34, Cys45, Cys48, and Cys62. The 40-residue stretch at 78 to 117 (KLSRIRQKIMELMLVNHPLDCPVCDAGGECDLQNACYGLG) folds into the 4Fe-4S His(Cys)3-ligated-type domain. [4Fe-4S] cluster contacts are provided by His94, Cys98, Cys101, Cys107, Cys146, Cys149, Cys152, Cys186, Cys189, Cys192, Cys196, Cys222, Cys225, Cys229, and Cys256. 2 4Fe-4S ferredoxin-type domains span residues 137-168 (PLIE…IRVV) and 177-206 (DTVD…SKPF). The region spanning 215 to 270 (FTTTPSVCPFCATGCQIEYHSRNGRVERVTSDDSTYNSGNLCINGRFGYSYINSPD) is the 4Fe-4S Mo/W bis-MGD-type domain.

In terms of assembly, heterotetramer with 2 beta subunits. It depends on [4Fe-4S] cluster as a cofactor.

It localises to the cell inner membrane. Its activity is regulated as follows. Not regulated by FAD or FMN. Its function is as follows. The SfrAB enzymatic complex is probably involved in acetate metabolism and does not participate directly in the reduction of Fe(3+) chelates. May serve as a major route for NADP regeneration. This is NADPH-Fe(3+) oxidoreductase subunit alpha (sfrA) from Geobacter sulfurreducens (strain DL-1 / KN400).